The primary structure comprises 207 residues: Large ribosomal subunit protein uL4 (207 aa).

Positions T48–G85 are disordered. Over residues G60–G71 the composition is skewed to basic residues.

Belongs to the universal ribosomal protein uL4 family. In terms of assembly, part of the 50S ribosomal subunit.

Its function is as follows. One of the primary rRNA binding proteins, this protein initially binds near the 5'-end of the 23S rRNA. It is important during the early stages of 50S assembly. It makes multiple contacts with different domains of the 23S rRNA in the assembled 50S subunit and ribosome. Forms part of the polypeptide exit tunnel. The protein is Large ribosomal subunit protein uL4 of Bacillus subtilis (strain 168).